The following is a 205-amino-acid chain: Dephospho-CoA kinase (205 aa).

A DPCK domain is found at 3–204 (KVGLTGGIGA…HRAHQPGESQ (202 aa)). Position 11–16 (11–16 (GAGKSE)) interacts with ATP.

This sequence belongs to the CoaE family.

The protein localises to the cytoplasm. It carries out the reaction 3'-dephospho-CoA + ATP = ADP + CoA + H(+). The protein operates within cofactor biosynthesis; coenzyme A biosynthesis; CoA from (R)-pantothenate: step 5/5. Its function is as follows. Catalyzes the phosphorylation of the 3'-hydroxyl group of dephosphocoenzyme A to form coenzyme A. The protein is Dephospho-CoA kinase of Streptomyces avermitilis (strain ATCC 31267 / DSM 46492 / JCM 5070 / NBRC 14893 / NCIMB 12804 / NRRL 8165 / MA-4680).